Reading from the N-terminus, the 395-residue chain is Argininosuccinate synthase (395 aa).

Position 7–15 (7–15) interacts with ATP; the sequence is LYSGGLDTS. Tyr-83 serves as a coordination point for L-citrulline. Gly-113 is a binding site for ATP. Residues Thr-115, Asn-119, and Asp-120 each coordinate L-aspartate. Residue Asn-119 participates in L-citrulline binding. Residues Arg-123, Ser-169, Ser-178, Glu-253, and Tyr-265 each contribute to the L-citrulline site.

The protein belongs to the argininosuccinate synthase family. Type 1 subfamily. As to quaternary structure, homotetramer.

The protein resides in the cytoplasm. It carries out the reaction L-citrulline + L-aspartate + ATP = 2-(N(omega)-L-arginino)succinate + AMP + diphosphate + H(+). The protein operates within amino-acid biosynthesis; L-arginine biosynthesis; L-arginine from L-ornithine and carbamoyl phosphate: step 2/3. The sequence is that of Argininosuccinate synthase from Picrophilus torridus (strain ATCC 700027 / DSM 9790 / JCM 10055 / NBRC 100828 / KAW 2/3).